Consider the following 243-residue polypeptide: GVDSHPPALPWPHFQWFQGLDWRSVRRGKEVYEQVFAPCHSLSFIKYRHFEAFMSKEEVKNMAASFEVDDDPDEKGEARKRPGKRFDTVVQPYKNEQEARYANNGALPPDLSVITNARHGGVDYIYALLTGYGRPVPGGVQLSTTQWYNPYFHGGIIGMPPPLTDDMIEYEDGTPASVPQMAKDVTCFLEWCSNPWWDERKLLGYKTIATLAVIAVSSGYYNRFLSGLWRSRRLAFRPFNYSK.

Over 1–201 (GVDSHPPALP…CSNPWWDERK (201 aa)) the chain is Mitochondrial intermembrane. A Cytochrome c domain is found at 5–194 (HPPALPWPHF…VTCFLEWCSN (190 aa)). Heme is bound by residues Cys39, His40, and Met159. The helical transmembrane segment at 202–221 (LLGYKTIATLAVIAVSSGYY) threads the bilayer. The Mitochondrial matrix portion of the chain corresponds to 222 to 243 (NRFLSGLWRSRRLAFRPFNYSK).

The protein belongs to the cytochrome c family. Component of the ubiquinol-cytochrome c oxidoreductase (cytochrome b-c1 complex, complex III, CIII), a multisubunit enzyme composed of 3 respiratory subunits cytochrome b, cytochrome c1 and Rieske protein, 2 core protein subunits, and additional low-molecular weight protein subunits. The complex exists as an obligatory dimer and forms supercomplexes (SCs) in the inner mitochondrial membrane with cytochrome c oxidase (complex IV, CIV). The cofactor is heme.

It is found in the mitochondrion inner membrane. It carries out the reaction a quinol + 2 Fe(III)-[cytochrome c](out) = a quinone + 2 Fe(II)-[cytochrome c](out) + 2 H(+)(out). Component of the ubiquinol-cytochrome c oxidoreductase, a multisubunit transmembrane complex that is part of the mitochondrial electron transport chain which drives oxidative phosphorylation. The respiratory chain contains 3 multisubunit complexes succinate dehydrogenase (complex II, CII), ubiquinol-cytochrome c oxidoreductase (cytochrome b-c1 complex, complex III, CIII) and cytochrome c oxidase (complex IV, CIV), that cooperate to transfer electrons derived from NADH and succinate to molecular oxygen, creating an electrochemical gradient over the inner membrane that drives transmembrane transport and the ATP synthase. The cytochrome b-c1 complex catalyzes electron transfer from ubiquinol to cytochrome c, linking this redox reaction to translocation of protons across the mitochondrial inner membrane, with protons being carried across the membrane as hydrogens on the quinol. In the process called Q cycle, 2 protons are consumed from the matrix, 4 protons are released into the intermembrane space and 2 electrons are passed to cytochrome c. Cytochrome c1 is a catalytic core subunit containing a c-type heme. It transfers electrons from the [2Fe-2S] iron-sulfur cluster of the Rieske protein to cytochrome c. This is Cytochrome c1, heme protein from Euglena gracilis.